The primary structure comprises 263 residues: Proteasome subunit alpha type-1 (263 aa).

The residue at position 1 (methionine 1) is an N-acetylmethionine. Position 110 is a phosphoserine; alternate (serine 110). Serine 110 carries an O-linked (GlcNAc) serine; alternate glycan. Residue lysine 115 forms a Glycyl lysine isopeptide (Lys-Gly) (interchain with G-Cter in ubiquitin) linkage. Serine 177 carries the phosphoserine modification. A Glycyl lysine isopeptide (Lys-Gly) (interchain with G-Cter in ubiquitin) cross-link involves residue lysine 208. Residues 232-263 (FLDGLEERPQRKAQPSQAAEEPAEKADEPMEH) form a disordered region. Basic and acidic residues predominate over residues 253 to 263 (PAEKADEPMEH).

It belongs to the peptidase T1A family. As to quaternary structure, the 26S proteasome consists of a 20S proteasome core and two 19S regulatory subunits. The 20S proteasome core is a barrel-shaped complex made of 28 subunits that are arranged in four stacked rings. The two outer rings are each formed by seven alpha subunits, and the two inner rings are formed by seven beta subunits. The proteolytic activity is exerted by three beta-subunits PSMB5, PSMB6 and PSMB7. Interacts with NOTCH3. Interacts with ZFAND1. Post-translationally, C-terminal extension is partially cleaved off by limited proteolysis leading to a conversion of the proteasome from its latent into its active form. Detected in liver (at protein level).

Its subcellular location is the cytoplasm. It is found in the nucleus. Component of the 20S core proteasome complex involved in the proteolytic degradation of most intracellular proteins. This complex plays numerous essential roles within the cell by associating with different regulatory particles. Associated with two 19S regulatory particles, forms the 26S proteasome and thus participates in the ATP-dependent degradation of ubiquitinated proteins. The 26S proteasome plays a key role in the maintenance of protein homeostasis by removing misfolded or damaged proteins that could impair cellular functions, and by removing proteins whose functions are no longer required. Associated with the PA200 or PA28, the 20S proteasome mediates ubiquitin-independent protein degradation. This type of proteolysis is required in several pathways including spermatogenesis (20S-PA200 complex) or generation of a subset of MHC class I-presented antigenic peptides (20S-PA28 complex). The polypeptide is Proteasome subunit alpha type-1 (Psma1) (Mus musculus (Mouse)).